The chain runs to 230 residues: Large ribosomal subunit protein uL1 (230 aa).

The protein belongs to the universal ribosomal protein uL1 family. Part of the 50S ribosomal subunit.

In terms of biological role, binds directly to 23S rRNA. The L1 stalk is quite mobile in the ribosome, and is involved in E site tRNA release. Its function is as follows. Protein L1 is also a translational repressor protein, it controls the translation of the L11 operon by binding to its mRNA. This is Large ribosomal subunit protein uL1 from Rubrobacter xylanophilus (strain DSM 9941 / JCM 11954 / NBRC 16129 / PRD-1).